The sequence spans 306 residues: Putative lipid kinase Sca_1050 (306 aa).

The DAGKc domain occupies 3-139 (QHFHRGILFY…FDVLKVNDTY (137 aa)). ATP contacts are provided by residues Ser44, 74-80 (GDGTVNE), and Thr101. Mg(2+)-binding residues include Ser220, Asp223, and Glu225. Glu281 functions as the Proton acceptor in the catalytic mechanism.

Belongs to the diacylglycerol/lipid kinase family. Mg(2+) is required as a cofactor.

Its function is as follows. May catalyze the ATP-dependent phosphorylation of lipids other than diacylglycerol (DAG). In Staphylococcus carnosus (strain TM300), this protein is Putative lipid kinase Sca_1050.